A 548-amino-acid chain; its full sequence is Esterase-5A (548 aa).

A signal peptide spans 1 to 19; the sequence is MHLVRWLICLIQLWIQLGA. Residues Cys-87 and Cys-106 are joined by a disulfide bond. Asn-95 and Asn-116 each carry an N-linked (GlcNAc...) asparagine glycan. Ser-210 (acyl-ester intermediate) is an active-site residue. A disulfide bridge links Cys-262 with Cys-274. Asn-479 carries N-linked (GlcNAc...) asparagine glycosylation. An intrachain disulfide couples Cys-518 to Cys-539.

It belongs to the type-B carboxylesterase/lipase family.

The protein resides in the secreted. It catalyses the reaction a carboxylic ester + H2O = an alcohol + a carboxylate + H(+). The polypeptide is Esterase-5A (Est-5A) (Drosophila persimilis (Fruit fly)).